The primary structure comprises 610 residues: UvrABC system protein C (610 aa).

In terms of domain architecture, GIY-YIG spans 16–94 (NQPGVYRMYN…IKQYLPKYNV (79 aa)). The UVR domain occupies 204–239 (NQVLSILVEKMEQASRELRFEDAAKARDQIQAIRRV).

It belongs to the UvrC family. As to quaternary structure, interacts with UvrB in an incision complex.

It is found in the cytoplasm. The UvrABC repair system catalyzes the recognition and processing of DNA lesions. UvrC both incises the 5' and 3' sides of the lesion. The N-terminal half is responsible for the 3' incision and the C-terminal half is responsible for the 5' incision. This is UvrABC system protein C from Vibrio cholerae serotype O1 (strain ATCC 39315 / El Tor Inaba N16961).